Reading from the N-terminus, the 500-residue chain is Aspartyl/glutamyl-tRNA(Asn/Gln) amidotransferase subunit B (500 aa).

Belongs to the GatB/GatE family. GatB subfamily. Heterotrimer of A, B and C subunits.

It catalyses the reaction L-glutamyl-tRNA(Gln) + L-glutamine + ATP + H2O = L-glutaminyl-tRNA(Gln) + L-glutamate + ADP + phosphate + H(+). The enzyme catalyses L-aspartyl-tRNA(Asn) + L-glutamine + ATP + H2O = L-asparaginyl-tRNA(Asn) + L-glutamate + ADP + phosphate + 2 H(+). Allows the formation of correctly charged Asn-tRNA(Asn) or Gln-tRNA(Gln) through the transamidation of misacylated Asp-tRNA(Asn) or Glu-tRNA(Gln) in organisms which lack either or both of asparaginyl-tRNA or glutaminyl-tRNA synthetases. The reaction takes place in the presence of glutamine and ATP through an activated phospho-Asp-tRNA(Asn) or phospho-Glu-tRNA(Gln). The sequence is that of Aspartyl/glutamyl-tRNA(Asn/Gln) amidotransferase subunit B from Sinorhizobium fredii (strain NBRC 101917 / NGR234).